The sequence spans 104 residues: Small ribosomal subunit protein uS10 (104 aa).

It belongs to the universal ribosomal protein uS10 family. Part of the 30S ribosomal subunit.

In terms of biological role, involved in the binding of tRNA to the ribosomes. In Thermosynechococcus vestitus (strain NIES-2133 / IAM M-273 / BP-1), this protein is Small ribosomal subunit protein uS10.